A 493-amino-acid chain; its full sequence is NADH-quinone oxidoreductase subunit N (493 aa).

14 helical membrane-spanning segments follow: residues Ala8–Ile28, Leu34–Ser54, Gly71–Ala91, Glu102–His122, Leu123–Tyr143, Tyr157–Gly177, Ala200–Phe220, Pro232–Leu252, Phe266–Leu286, Leu294–Gly314, Ile325–Ala345, Ala370–Val390, Trp405–Leu427, and Pro443–Pro463. Residues Val473 to Pro493 are disordered.

The protein belongs to the complex I subunit 2 family. NDH-1 is composed of 14 different subunits. Subunits NuoA, H, J, K, L, M, N constitute the membrane sector of the complex.

The protein resides in the cell inner membrane. The enzyme catalyses a quinone + NADH + 5 H(+)(in) = a quinol + NAD(+) + 4 H(+)(out). Functionally, NDH-1 shuttles electrons from NADH, via FMN and iron-sulfur (Fe-S) centers, to quinones in the respiratory chain. The immediate electron acceptor for the enzyme in this species is believed to be ubiquinone. Couples the redox reaction to proton translocation (for every two electrons transferred, four hydrogen ions are translocated across the cytoplasmic membrane), and thus conserves the redox energy in a proton gradient. This is NADH-quinone oxidoreductase subunit N from Methylococcus capsulatus (strain ATCC 33009 / NCIMB 11132 / Bath).